A 388-amino-acid chain; its full sequence is D-xylose dehydrogenase (388 aa).

It belongs to the Gfo/Idh/MocA family. As to quaternary structure, homotetramer. It depends on Zn(2+) as a cofactor.

The catalysed reaction is D-xylose + NADP(+) = D-xylono-1,5-lactone + NADPH + H(+). The enzyme catalyses D-xylose + NAD(+) = D-xylono-1,5-lactone + NADH + H(+). The protein operates within carbohydrate metabolism; D-xylose degradation. Its function is as follows. Catalyzes the NADP(+)-dependent oxidation of D-xylose. Is able to use both NADP(+) and NAD(+); however, the enzyme shows a very strong preference for NADP(+). Is likely involved in the first step of the oxidative D-xylose degradation pathway. The polypeptide is D-xylose dehydrogenase (xdh) (Paenarthrobacter nicotinovorans (Arthrobacter nicotinovorans)).